A 470-amino-acid polypeptide reads, in one-letter code: ATP synthase subunit beta (470 aa).

148–155 contacts ATP; it reads GGAGVGKT.

This sequence belongs to the ATPase alpha/beta chains family. As to quaternary structure, F-type ATPases have 2 components, CF(1) - the catalytic core - and CF(0) - the membrane proton channel. CF(1) has five subunits: alpha(3), beta(3), gamma(1), delta(1), epsilon(1). CF(0) has three main subunits: a(1), b(2) and c(9-12). The alpha and beta chains form an alternating ring which encloses part of the gamma chain. CF(1) is attached to CF(0) by a central stalk formed by the gamma and epsilon chains, while a peripheral stalk is formed by the delta and b chains.

The protein resides in the cell inner membrane. The catalysed reaction is ATP + H2O + 4 H(+)(in) = ADP + phosphate + 5 H(+)(out). Produces ATP from ADP in the presence of a proton gradient across the membrane. The catalytic sites are hosted primarily by the beta subunits. The chain is ATP synthase subunit beta from Teredinibacter turnerae (strain ATCC 39867 / T7901).